We begin with the raw amino-acid sequence, 91 residues long: Cytochrome c-554(547) (91 aa).

Positions 15, 18, 19, and 64 each coordinate heme c.

As to quaternary structure, monomer. In terms of processing, binds 1 heme c group covalently per subunit.

The protein is Cytochrome c-554(547) of Halothiobacillus neapolitanus (Thiobacillus neapolitanus).